A 342-amino-acid polypeptide reads, in one-letter code: D-erythrose-4-phosphate dehydrogenase (342 aa).

Position 11-12 (11-12) interacts with NAD(+); the sequence is RV. Residues 153 to 155, arginine 199, 212 to 213, and arginine 235 contribute to the substrate site; these read SCT and TK. Cysteine 154 acts as the Nucleophile in catalysis. Asparagine 317 lines the NAD(+) pocket.

The protein belongs to the glyceraldehyde-3-phosphate dehydrogenase family. Epd subfamily. Homotetramer.

Its subcellular location is the cytoplasm. The catalysed reaction is D-erythrose 4-phosphate + NAD(+) + H2O = 4-phospho-D-erythronate + NADH + 2 H(+). The protein operates within cofactor biosynthesis; pyridoxine 5'-phosphate biosynthesis; pyridoxine 5'-phosphate from D-erythrose 4-phosphate: step 1/5. Its function is as follows. Catalyzes the NAD-dependent conversion of D-erythrose 4-phosphate to 4-phosphoerythronate. This Pseudoalteromonas atlantica (strain T6c / ATCC BAA-1087) protein is D-erythrose-4-phosphate dehydrogenase.